Here is a 400-residue protein sequence, read N- to C-terminus: Deoxyguanosinetriphosphate triphosphohydrolase-like protein (400 aa).

Residues 73–215 form the HD domain; that stretch reads RLTHSIEVSQ…AAIADDIAYN (143 aa).

Belongs to the dGTPase family. Type 2 subfamily.

In Bartonella tribocorum (strain CIP 105476 / IBS 506), this protein is Deoxyguanosinetriphosphate triphosphohydrolase-like protein.